Reading from the N-terminus, the 206-residue chain is Ribosomal RNA small subunit methyltransferase G (206 aa).

Residues Gly-73, Leu-78, 124-125 (VE), and Arg-139 each bind S-adenosyl-L-methionine.

This sequence belongs to the methyltransferase superfamily. RNA methyltransferase RsmG family.

Its subcellular location is the cytoplasm. It catalyses the reaction guanosine(527) in 16S rRNA + S-adenosyl-L-methionine = N(7)-methylguanosine(527) in 16S rRNA + S-adenosyl-L-homocysteine. In terms of biological role, specifically methylates the N7 position of guanine in position 527 of 16S rRNA. The sequence is that of Ribosomal RNA small subunit methyltransferase G from Pectobacterium atrosepticum (strain SCRI 1043 / ATCC BAA-672) (Erwinia carotovora subsp. atroseptica).